Reading from the N-terminus, the 334-residue chain is GTP 3',8-cyclase (334 aa).

Residues glycine 11 to alanine 236 enclose the Radical SAM core domain. Position 20 (arginine 20) interacts with GTP. Residues cysteine 27 and cysteine 31 each coordinate [4Fe-4S] cluster. Position 33 (tyrosine 33) interacts with S-adenosyl-L-methionine. Residue cysteine 34 participates in [4Fe-4S] cluster binding. Arginine 69 is a GTP binding site. An S-adenosyl-L-methionine-binding site is contributed by glycine 73. Residue threonine 100 coordinates GTP. Serine 124 is an S-adenosyl-L-methionine binding site. Lysine 161 contributes to the GTP binding site. Residue methionine 195 participates in S-adenosyl-L-methionine binding. Positions 260 and 263 each coordinate [4Fe-4S] cluster. Arginine 265 to arginine 267 serves as a coordination point for GTP. Cysteine 277 contributes to the [4Fe-4S] cluster binding site.

Belongs to the radical SAM superfamily. MoaA family. In terms of assembly, monomer and homodimer. It depends on [4Fe-4S] cluster as a cofactor.

The enzyme catalyses GTP + AH2 + S-adenosyl-L-methionine = (8S)-3',8-cyclo-7,8-dihydroguanosine 5'-triphosphate + 5'-deoxyadenosine + L-methionine + A + H(+). It participates in cofactor biosynthesis; molybdopterin biosynthesis. Its function is as follows. Catalyzes the cyclization of GTP to (8S)-3',8-cyclo-7,8-dihydroguanosine 5'-triphosphate. The polypeptide is GTP 3',8-cyclase (Pseudomonas putida (strain GB-1)).